Here is an 86-residue protein sequence, read N- to C-terminus: Omega-theraphotoxin-Hhn1e (86 aa).

The N-terminal stretch at 1–21 (MKSIVFVALFGLALLAVVCSA) is a signal peptide. Residues 22–50 (SEGAHKELLKEVVRAMVVDKTDAVQAEER) constitute a propeptide that is removed on maturation. Disulfide bonds link Cys52–Cys66 and Cys65–Cys78.

It belongs to the neurotoxin 10 (Hwtx-1) family. 17 (Hntx-9) subfamily. As to expression, expressed by the venom gland.

The protein resides in the secreted. Its function is as follows. Ion channel inhibitor. In Cyriopagopus hainanus (Chinese bird spider), this protein is Omega-theraphotoxin-Hhn1e.